The primary structure comprises 189 residues: Crossover junction endodeoxyribonuclease RuvC (189 aa).

Catalysis depends on residues aspartate 7, glutamate 68, and aspartate 141. The Mg(2+) site is built by aspartate 7, glutamate 68, and aspartate 141.

The protein belongs to the RuvC family. In terms of assembly, homodimer which binds Holliday junction (HJ) DNA. The HJ becomes 2-fold symmetrical on binding to RuvC with unstacked arms; it has a different conformation from HJ DNA in complex with RuvA. In the full resolvosome a probable DNA-RuvA(4)-RuvB(12)-RuvC(2) complex forms which resolves the HJ. Mg(2+) serves as cofactor.

The protein resides in the cytoplasm. The enzyme catalyses Endonucleolytic cleavage at a junction such as a reciprocal single-stranded crossover between two homologous DNA duplexes (Holliday junction).. Its function is as follows. The RuvA-RuvB-RuvC complex processes Holliday junction (HJ) DNA during genetic recombination and DNA repair. Endonuclease that resolves HJ intermediates. Cleaves cruciform DNA by making single-stranded nicks across the HJ at symmetrical positions within the homologous arms, yielding a 5'-phosphate and a 3'-hydroxyl group; requires a central core of homology in the junction. The consensus cleavage sequence is 5'-(A/T)TT(C/G)-3'. Cleavage occurs on the 3'-side of the TT dinucleotide at the point of strand exchange. HJ branch migration catalyzed by RuvA-RuvB allows RuvC to scan DNA until it finds its consensus sequence, where it cleaves and resolves the cruciform DNA. The chain is Crossover junction endodeoxyribonuclease RuvC from Nocardia farcinica (strain IFM 10152).